Here is a 118-residue protein sequence, read N- to C-terminus: Large ribosomal subunit protein bL20c (118 aa).

The protein belongs to the bacterial ribosomal protein bL20 family.

It localises to the plastid. Binds directly to 23S ribosomal RNA and is necessary for the in vitro assembly process of the 50S ribosomal subunit. It is not involved in the protein synthesizing functions of that subunit. The chain is Large ribosomal subunit protein bL20c from Aneura mirabilis (Parasitic liverwort).